Here is a 380-residue protein sequence, read N- to C-terminus: Anhydro-N-acetylmuramic acid kinase (380 aa).

9–16 contacts ATP; sequence GTSADGVD.

The protein belongs to the anhydro-N-acetylmuramic acid kinase family.

It catalyses the reaction 1,6-anhydro-N-acetyl-beta-muramate + ATP + H2O = N-acetyl-D-muramate 6-phosphate + ADP + H(+). It participates in amino-sugar metabolism; 1,6-anhydro-N-acetylmuramate degradation. It functions in the pathway cell wall biogenesis; peptidoglycan recycling. Functionally, catalyzes the specific phosphorylation of 1,6-anhydro-N-acetylmuramic acid (anhMurNAc) with the simultaneous cleavage of the 1,6-anhydro ring, generating MurNAc-6-P. Is required for the utilization of anhMurNAc either imported from the medium or derived from its own cell wall murein, and thus plays a role in cell wall recycling. This is Anhydro-N-acetylmuramic acid kinase from Synechococcus sp. (strain CC9902).